Consider the following 436-residue polypeptide: Fibrinogen gamma chain (436 aa).

The signal sequence occupies residues 1-25; that stretch reads MSWSLQPPSFLLCCLLLLFSPTGLA. N-linked (GlcNAc...) asparagine glycosylation is present at N77. Positions 169-415 constitute a Fibrinogen C-terminal domain; that stretch reads QIHDTTGKDC…ETTMKIIPFN (247 aa). C178 and C207 are oxidised to a cystine. Ca(2+) is bound by residues D343, D345, and G349. A disulfide bridge links C351 with C364. Residue Q423 forms an Isoglutamyl lysine isopeptide (Gln-Lys) (interchain with K-431) linkage. A Phosphoserine modification is found at S430. Residue K431 forms an Isoglutamyl lysine isopeptide (Lys-Gln) (interchain with Q-423) linkage.

As to quaternary structure, heterohexamer; disulfide linked. Contains 2 sets of 3 non-identical chains (alpha, beta and gamma). The 2 heterotrimers are in head to head conformation with the N-termini in a small central domain. Post-translationally, conversion of fibrinogen to fibrin is triggered by thrombin, which cleaves fibrinopeptides A and B from alpha and beta chains, and thus exposes the N-terminal polymerization sites responsible for the formation of the soft clot. The soft clot is converted into the hard clot by factor XIIIA which catalyzes the epsilon-(gamma-glutamyl)lysine cross-linking between gamma chains (stronger) and between alpha chains (weaker) of different monomers.

The protein localises to the secreted. Together with fibrinogen alpha (FGA) and fibrinogen beta (FGB), polymerizes to form an insoluble fibrin matrix. Fibrin has a major function in hemostasis as one of the primary components of blood clots. In addition, functions during the early stages of wound repair to stabilize the lesion and guide cell migration during re-epithelialization. Was originally thought to be essential for platelet aggregation, based on in vitro studies using anticoagulated blood. However, subsequent studies have shown that it is not absolutely required for thrombus formation in vivo. Enhances expression of SELP in activated platelets via an ITGB3-dependent pathway. Maternal fibrinogen is essential for successful pregnancy. Fibrin deposition is also associated with infection, where it protects against IFNG-mediated hemorrhage. May also facilitate the immune response via both innate and T-cell mediated pathways. This is Fibrinogen gamma chain (Fgg) from Mus musculus (Mouse).